The sequence spans 779 residues: Ribosome-releasing factor 2, mitochondrial (779 aa).

The tr-type G domain maps to 68–353 (AKIRNIGIMA…AVTTYLPSPE (286 aa)). Residues 77–84 (AHIDAGKT), 141–145 (DTPGH), and 195–198 (NKMD) each bind GTP.

The protein belongs to the TRAFAC class translation factor GTPase superfamily. Classic translation factor GTPase family. EF-G/EF-2 subfamily.

The protein localises to the mitochondrion. It carries out the reaction GTP + H2O = GDP + phosphate + H(+). Mitochondrial GTPase that mediates the disassembly of ribosomes from messenger RNA at the termination of mitochondrial protein biosynthesis. Acts in collaboration with MRRF. GTP hydrolysis follows the ribosome disassembly and probably occurs on the ribosome large subunit. Not involved in the GTP-dependent ribosomal translocation step during translation elongation. This Rattus norvegicus (Rat) protein is Ribosome-releasing factor 2, mitochondrial (Gfm2).